A 233-amino-acid chain; its full sequence is Biosynthetic peptidoglycan transglycosylase (233 aa).

Residues 8–28 (LIALPVGIFIFFNAYVYGNII) traverse the membrane as a helical segment.

This sequence belongs to the glycosyltransferase 51 family.

The protein localises to the cell inner membrane. It carries out the reaction [GlcNAc-(1-&gt;4)-Mur2Ac(oyl-L-Ala-gamma-D-Glu-L-Lys-D-Ala-D-Ala)](n)-di-trans,octa-cis-undecaprenyl diphosphate + beta-D-GlcNAc-(1-&gt;4)-Mur2Ac(oyl-L-Ala-gamma-D-Glu-L-Lys-D-Ala-D-Ala)-di-trans,octa-cis-undecaprenyl diphosphate = [GlcNAc-(1-&gt;4)-Mur2Ac(oyl-L-Ala-gamma-D-Glu-L-Lys-D-Ala-D-Ala)](n+1)-di-trans,octa-cis-undecaprenyl diphosphate + di-trans,octa-cis-undecaprenyl diphosphate + H(+). The protein operates within cell wall biogenesis; peptidoglycan biosynthesis. Its function is as follows. Peptidoglycan polymerase that catalyzes glycan chain elongation from lipid-linked precursors. The chain is Biosynthetic peptidoglycan transglycosylase from Neisseria meningitidis serogroup C (strain 053442).